The following is a 226-amino-acid chain: 7-cyano-7-deazaguanine synthase (226 aa).

11–21 contacts ATP; the sequence is LSGGLDSATCL. Zn(2+) contacts are provided by C191, C201, C204, and C207.

This sequence belongs to the QueC family. Zn(2+) serves as cofactor.

It catalyses the reaction 7-carboxy-7-deazaguanine + NH4(+) + ATP = 7-cyano-7-deazaguanine + ADP + phosphate + H2O + H(+). It functions in the pathway purine metabolism; 7-cyano-7-deazaguanine biosynthesis. Functionally, catalyzes the ATP-dependent conversion of 7-carboxy-7-deazaguanine (CDG) to 7-cyano-7-deazaguanine (preQ(0)). This chain is 7-cyano-7-deazaguanine synthase, found in Aromatoleum aromaticum (strain DSM 19018 / LMG 30748 / EbN1) (Azoarcus sp. (strain EbN1)).